We begin with the raw amino-acid sequence, 270 residues long: Zinc finger protein ZAT2 (270 aa).

Polar residues-rich tracts occupy residues 1-28 (MSNTSNSDPNSDIPFASSNVTLPSYNQN) and 36-48 (LTNNEVGSSSSSP). The segment at 1–64 (MSNTSNSDPN…QPDPDASQIA (64 aa)) is disordered. The segment at 65–87 (RPCTECGKQFGSLKALFGHMRCH) adopts a C2H2-type 1 zinc-finger fold. Residues 95 to 119 (INPPSNFKRRINSNAASSSSSWDPS) form a disordered region. Low complexity predominate over residues 106 to 115 (NSNAASSSSS). 2 C2H2-type zinc fingers span residues 148 to 170 (FECDGCKKVFGSHQALGGHRATH) and 211 to 233 (HRCNICSRVFSSGQALGGHMRCH).

Interacts (via the EAR motif) with TPL. As to expression, expressed exclusively in pollen.

Its subcellular location is the nucleus. In terms of biological role, mediates the regulation of male germ cell division by DUO1. This Arabidopsis thaliana (Mouse-ear cress) protein is Zinc finger protein ZAT2.